The following is a 120-amino-acid chain: Large ribosomal subunit protein uL24 (120 aa).

The protein belongs to the universal ribosomal protein uL24 family. As to quaternary structure, part of the 50S ribosomal subunit.

In terms of biological role, one of two assembly initiator proteins, it binds directly to the 5'-end of the 23S rRNA, where it nucleates assembly of the 50S subunit. Functionally, located at the polypeptide exit tunnel on the outside of the subunit. In Archaeoglobus fulgidus (strain ATCC 49558 / DSM 4304 / JCM 9628 / NBRC 100126 / VC-16), this protein is Large ribosomal subunit protein uL24.